We begin with the raw amino-acid sequence, 368 residues long: 3-dehydroquinate synthase (368 aa).

Residues 99–103 (GVVGD), 123–124 (TT), lysine 136, and lysine 145 contribute to the NAD(+) site. Zn(2+) contacts are provided by glutamate 178, histidine 242, and histidine 259.

It belongs to the sugar phosphate cyclases superfamily. Dehydroquinate synthase family. It depends on NAD(+) as a cofactor. Co(2+) is required as a cofactor. Requires Zn(2+) as cofactor.

Its subcellular location is the cytoplasm. It carries out the reaction 7-phospho-2-dehydro-3-deoxy-D-arabino-heptonate = 3-dehydroquinate + phosphate. Its pathway is metabolic intermediate biosynthesis; chorismate biosynthesis; chorismate from D-erythrose 4-phosphate and phosphoenolpyruvate: step 2/7. In terms of biological role, catalyzes the conversion of 3-deoxy-D-arabino-heptulosonate 7-phosphate (DAHP) to dehydroquinate (DHQ). The protein is 3-dehydroquinate synthase of Chlorobaculum tepidum (strain ATCC 49652 / DSM 12025 / NBRC 103806 / TLS) (Chlorobium tepidum).